Reading from the N-terminus, the 238-residue chain is Phosphoribosylaminoimidazole-succinocarboxamide synthase (238 aa).

This sequence belongs to the SAICAR synthetase family.

The enzyme catalyses 5-amino-1-(5-phospho-D-ribosyl)imidazole-4-carboxylate + L-aspartate + ATP = (2S)-2-[5-amino-1-(5-phospho-beta-D-ribosyl)imidazole-4-carboxamido]succinate + ADP + phosphate + 2 H(+). Its pathway is purine metabolism; IMP biosynthesis via de novo pathway; 5-amino-1-(5-phospho-D-ribosyl)imidazole-4-carboxamide from 5-amino-1-(5-phospho-D-ribosyl)imidazole-4-carboxylate: step 1/2. In Chlorobium phaeovibrioides (strain DSM 265 / 1930) (Prosthecochloris vibrioformis (strain DSM 265)), this protein is Phosphoribosylaminoimidazole-succinocarboxamide synthase.